The primary structure comprises 232 residues: 2,3,4,5-tetrahydropyridine-2,6-dicarboxylate N-acetyltransferase (232 aa).

This sequence belongs to the transferase hexapeptide repeat family. DapH subfamily.

It carries out the reaction (S)-2,3,4,5-tetrahydrodipicolinate + acetyl-CoA + H2O = L-2-acetamido-6-oxoheptanedioate + CoA. The protein operates within amino-acid biosynthesis; L-lysine biosynthesis via DAP pathway; LL-2,6-diaminopimelate from (S)-tetrahydrodipicolinate (acetylase route): step 1/3. In terms of biological role, catalyzes the transfer of an acetyl group from acetyl-CoA to tetrahydrodipicolinate. This Streptococcus mutans serotype c (strain ATCC 700610 / UA159) protein is 2,3,4,5-tetrahydropyridine-2,6-dicarboxylate N-acetyltransferase.